Here is an 83-residue protein sequence, read N- to C-terminus: Protein L83L (83 aa).

This sequence belongs to the asfivirus L83L family. Interacts with host IL1B.

It localises to the host cytoplasm. May subvert the host innate immune response by interacting with host IL1B and interfering with its function. The sequence is that of Protein L83L from Ornithodoros (relapsing fever ticks).